The primary structure comprises 1031 residues: Toll-like receptor 9 (1031 aa).

An N-terminal signal peptide occupies residues 1–25 (MGPCHGALQPLSLLVQAAMLAVALA). Over 26 to 817 (QGTLPPFLPC…LCLDESLSWD (792 aa)) the chain is Extracellular. The cysteines at positions 35 and 45 are disulfide-linked. 47–51 (WLFLK) is a DNA binding site. LRR repeat units lie at residues 62-85 (RDNVTSLSLLSNRIHHLHDSDFAQ), 87-110 (SNLQKLNLKWNCPPAGLSPMHFPC), 122-147 (VPTLEELNLSYNGITTVPALPSSLVS), 150-166 (LSRTNILQLDPTSLTGL), 167-190 (HALRFLYMDGNCYYKNPCGRALEV), 198-221 (LGNLTHLSLKYNNLTTVPRSLPPS), 223-242 (EYLLLSYNHIVTLAPEDLAN), 243-268 (LTALRVLDVGGNCRRCDHARNPCVEC), 283-306 (LSRLEGLVLKDSSLYQLNPRWFRG), 308-332 (GNLTVLDLSENFLYDCITKTKAFQG), 333-356 (LAQLRRLNLSFNYHKKVSFAHLTL), 363-386 (LLSLQELDMHGIFFRSLSQKTLQP), 390-413 (LPMLQRLYLQMNFINQAQLGIFKD), 414-438 (FPGLRYIDLSDNRISGAVEPVATTG), 470-494 (CKNLSFTLDLSRNNLVTVQPEMFAQ), 496-519 (SRLQCLRLSHNSISQAVNGSQFVP), 520-543 (LTSLQVLDLSHNKLDLYHGRSFTE), 545-567 (PRLEALDLSYNSQPFSMRGVGHN), 574-598 (LPTLRYLSLAHNGIHSRVSQQLCST), 600-622 (LWALDFSGNSLSQMWAEGDLYLR), 627-650 (LRSLIRLDLSQNRLHTLLPCTLGN), 652-675 (PKSLQLLRLRNNYLAFFNWSSLTL), 676-699 (LPNLETLDLAGNQLKALSNGSLPS), 701-723 (TQLQRLDVSRNSIIFVVPGFFAL), 724-747 (ATRLRELNLSANALRTVEPSWFGF), and 749-772 (AGSLEVLDVSANPLHCACGAAFVD). N-linked (GlcNAc...) asparagine glycosylation occurs at Asn64. DNA contacts are provided by residues 72 to 77 (SNRIHH) and 95 to 109 (KWNCPPAGLSPMHFP). An intrachain disulfide couples Cys98 to Cys110. The N-linked (GlcNAc...) asparagine glycan is linked to Asn129. DNA is bound by residues Tyr132, Arg152, and 179 to 181 (YYK). A disulfide bridge links Cys178 with Cys184. Asn200 carries N-linked (GlcNAc...) asparagine glycosylation. Tyr208 contributes to the DNA binding site. Asn210 and Asn242 each carry an N-linked (GlcNAc...) asparagine glycan. Cystine bridges form between Cys255/Cys268 and Cys258/Cys265. Cys258 carries S-palmitoyl cysteine lipidation. Arg262 serves as a coordination point for DNA. Cys265 carries the S-palmitoyl cysteine lipid modification. Asn309 and Asn340 each carry an N-linked (GlcNAc...) asparagine glycan. A disulfide bridge links Cys470 with Cys500. 2 N-linked (GlcNAc...) asparagine glycosylation sites follow: Asn472 and Asn513. Asn567 carries an N-linked (GlcNAc...) asparagine glycan. Residues Asn669 and Asn694 are each glycosylated (N-linked (GlcNAc...) asparagine). A glycan (N-linked (GlcNAc...) asparagine) is linked at Asn731. Disulfide bonds link Cys764-Cys790 and Cys766-Cys809. The helical transmembrane segment at 818-838 (CFGLSLLVVALGLAMPMLHHL) threads the bilayer. Residues 839-1031 (CGWDLWYCFH…NFCRGPTMAE (193 aa)) lie on the Cytoplasmic side of the membrane. In terms of domain architecture, TIR spans 866 to 1011 (LSYDAFVVFD…SFWAQLGMAL (146 aa)).

It belongs to the Toll-like receptor family. In terms of assembly, monomer and homodimer. Exists as a monomer in the absence of unmethylated cytidine-phosphate-guanosine (CpG) ligand. Proteolytic processing of an insertion loop (Z-loop) is required for homodimerization upon binding to the unmethylated CpG ligand leading to its activation. Interacts with MYD88 via their respective TIR domains. Interacts with BTK. Interacts (via transmembrane domain) with UNC93B1. Interacts with CD300LH; the interaction may promote full activation of TLR9-triggered innate responses. Interacts with CNPY3 and HSP90B1; this interaction is required for proper folding in the endoplasmic reticulum. Interacts with SMPDL3B. Interacts with CD82; this interaction is essential for TLR9-dependent myddosome formation in response to CpG stimulation. In terms of processing, activated by proteolytic cleavage of the flexible loop between repeats LRR14 and LRR15 within the ectodomain. Cleavage requires UNC93B1. Proteolytically processed by first removing the majority of the ectodomain by either asparagine endopeptidase (AEP) or a cathepsin followed by a trimming event that is solely cathepsin mediated and required for optimal receptor signaling. Post-translationally, palmitoylated by ZDHHC3 in the Golgi regulates TLR9 trafficking from the Golgi to endosomes. Depalmitoylation by PPT1 controls the release of TLR9 from UNC93B1 in endosomes. As to expression, expressed in airway epithelium, vascular endothelium and inflammatory cells in blood vessels of the lungs (at protein level). Highly expressed in pulmonary intravascular macrophages (PIMs) and to a lesser extent in alveolar macrophages, neutrophiles, type-II alveolar epithelial cells and bronchial epithelial cells of the lungs (at protein level). High constitutive intracellular expression in leukocytes including polymorphonuclear leukocytes (PMNs), CD4 and CD8 T cells (at protein level). Expressed throughout the respiratory tract including larynx, upper, middle and lower trachea, and bronchus in isolated equine respiratory epithelial cells (ERECs) and in fully differentiated ERECs cultured at the air-fluid interface (AFI) (at protein level). Constitutively expressed in peripheral blood mononuclear cells (PBMCs), lymph nodes and spleen. The level of expression in PBMCs is about 2- to 3-fold higher than that in lymph nodes and spleen. Very low expression in liver, heart, lung, kidney, small intestine, colon and stomach. Low expression in the airway tissue epithelium of the larynx, upper trachea, middle tranchea, lower trachea, bronchus and spleen, and more abundant expression in mesenteric lymph node. Not expressed in fully differentiated bronchus epithelial cells cultured at the AFI for four weeks. Expressed in gingival tissue.

It localises to the endoplasmic reticulum membrane. The protein resides in the endosome. Its subcellular location is the lysosome. It is found in the cytoplasmic vesicle. The protein localises to the phagosome. It localises to the cell membrane. The protein resides in the cytoplasm. Its subcellular location is the nucleus. In terms of biological role, key component of innate and adaptive immunity. TLRs (Toll-like receptors) control host immune response against pathogens through recognition of molecular patterns specific to microorganisms. TLR9 is a nucleotide-sensing TLR which is activated by unmethylated cytidine-phosphate-guanosine (CpG) dinucleotides. Acts via MYD88 and TRAF6, leading to NF-kappa-B activation, cytokine secretion and the inflammatory response. Upon CpG stimulation, induces B-cell proliferation, activation, survival and antibody production. The protein is Toll-like receptor 9 of Equus caballus (Horse).